We begin with the raw amino-acid sequence, 138 residues long: MRTLWIMAVLLVGVEGGVIELTKMFVQEMGKNALTSYSLYGCNCGPGGRRKPMDATDSCCHVHKCCYKKLTDCDPIKDRYSYSWVNKAIVCGEDNPCLKEMCECDKAVAIRFRENLDTYDKKKKINLKLFCKKTSEQC.

An N-terminal signal peptide occupies residues 1 to 16 (MRTLWIMAVLLVGVEG). Cystine bridges form between Cys-42-Cys-131, Cys-44-Cys-60, Cys-65-Cys-138, Cys-66-Cys-104, Cys-73-Cys-97, and Cys-91-Cys-102. The important for membrane-damaging activities in eukaryotes and bacteria; heparin-binding stretch occupies residues 121 to 133 (KKKKINLKLFCKK).

Expressed by the venom gland.

It is found in the secreted. Functionally, snake venom phospholipase A2 homolog that lacks catalytic activity. It shows myotoxic and weak anticoagulant activities. A model of myotoxic mechanism has been proposed: an apo Lys49-PLA2 is activated by the entrance of a hydrophobic molecule (e.g. fatty acid) at the hydrophobic channel of the protein leading to a reorientation of a monomer. This reorientation causes a transition between 'inactive' to 'active' states, causing alignment of C-terminal and membrane-docking sites (MDoS) side-by-side and putting the membrane-disruption sites (MDiS) in the same plane, exposed to solvent and in a symmetric position for both monomers. The MDoS region stabilizes the toxin on membrane by the interaction of charged residues with phospholipid head groups. Subsequently, the MDiS region destabilizes the membrane with penetration of hydrophobic residues. This insertion causes a disorganization of the membrane, allowing an uncontrolled influx of ions (i.e. calcium and sodium), and eventually triggering irreversible intracellular alterations and cell death. This Trimeresurus stejnegeri (Chinese green tree viper) protein is Basic phospholipase A2 homolog Ts-K49b.